We begin with the raw amino-acid sequence, 104 residues long: Pterin-4-alpha-carbinolamine dehydratase (104 aa).

N-acetylalanine is present on Ala-2. Substrate contacts are provided by residues Asp-61–His-63 and Ser-78–Glu-81.

This sequence belongs to the pterin-4-alpha-carbinolamine dehydratase family. As to quaternary structure, homotetramer and homodimer. Heterotetramer with HNF1A; formed by a dimer of dimers. Interacts with HNF1B (via HNF-p1 domain); the interaction increases HNF1B transactivation activity.

It is found in the cytoplasm. The protein localises to the nucleus. The catalysed reaction is (4aS,6R)-4a-hydroxy-L-erythro-5,6,7,8-tetrahydrobiopterin = (6R)-L-erythro-6,7-dihydrobiopterin + H2O. Involved in tetrahydrobiopterin biosynthesis. Seems to both prevent the formation of 7-pterins and accelerate the formation of quinonoid-BH2. Coactivator for HNF1A-dependent transcription. Regulates the dimerization of homeodomain protein HNF1A and enhances its transcriptional activity. Also acts as a coactivator for HNF1B-dependent transcription. This chain is Pterin-4-alpha-carbinolamine dehydratase (PCBD1), found in Bos taurus (Bovine).